The following is a 362-amino-acid chain: Protein BIG GRAIN 1-like D (362 aa).

Disordered regions lie at residues 22–113, 132–168, and 303–327; these read IDPK…TLFH, KFNR…GGRI, and VKTN…ASDS. Residues 23-47 are compositionally biased toward polar residues; the sequence is DPKTQKTQPYVGSVNTTTKKQSIVT. The segment covering 50 to 60 has biased composition (basic and acidic residues); it reads VPDRKIHRDRF. Over residues 63–78 the composition is skewed to low complexity; sequence SVSSSSDSNSSIFSSS. Over residues 132–144 the composition is skewed to basic and acidic residues; that stretch reads KFNRHDENWENTR. Acidic residues predominate over residues 309-324; sequence EDYEDDDEDDDDDDVA.

This sequence belongs to the BIG GRAIN 1 (BG1) plant protein family.

It is found in the cell membrane. Its function is as follows. Involved in auxin transport. Regulator of the auxin signaling pathway. The chain is Protein BIG GRAIN 1-like D from Arabidopsis thaliana (Mouse-ear cress).